A 389-amino-acid chain; its full sequence is uncharacterized protein (389 aa).

3 WD repeats span residues 11-53 (SFGS…QKIK), 146-186 (SHHD…EEDA), and 289-330 (AHGD…LDIP). Serine 351 bears the Phosphoserine mark. Residues 361–389 (QKESVSTRPRKEKHKKAKKHSMKSRFKPY) form a disordered region. Positions 368 to 389 (RPRKEKHKKAKKHSMKSRFKPY) are enriched in basic residues.

This is an uncharacterized protein from Saccharomyces cerevisiae (strain ATCC 204508 / S288c) (Baker's yeast).